Consider the following 287-residue polypeptide: Putative sugar uptake protein EF_0928 (287 aa).

10 helical membrane-spanning segments follow: residues 5-27 (IALVPMIAWGSIGLVSGKIGGSA), 32-49 (LGMTIGALLFSIVVFFVI), 53-71 (LTTATLIVGFISGLFWSLG), 84-106 (VSVGLPISTGMQLVVNTVAGAVF), 116-134 (FVVGFIALAFLVFGVYLTA), 155-177 (IRALIFSTVGYGVYTIIINATGL), 182-200 (IILPQSIGMLVGASFFAFK), 207-229 (FVWMNMTTGLLWGLGNICMLLTM), 234-256 (LAISFSLSQMGIIISTLGGIFLL), and 265-284 (MFYVIFGCIFVILGGILLGY).

Belongs to the GRP transporter (TC 2.A.7.5) family.

Its subcellular location is the cell membrane. The sequence is that of Putative sugar uptake protein EF_0928 from Enterococcus faecalis (strain ATCC 700802 / V583).